A 565-amino-acid chain; its full sequence is Dihydroxy-acid dehydratase (565 aa).

D80 contacts Mg(2+). C121 is a binding site for [2Fe-2S] cluster. Residues D122 and K123 each contribute to the Mg(2+) site. At K123 the chain carries N6-carboxylysine. A [2Fe-2S] cluster-binding site is contributed by C194. Mg(2+) is bound at residue E447. Catalysis depends on S473, which acts as the Proton acceptor.

This sequence belongs to the IlvD/Edd family. As to quaternary structure, homodimer. [2Fe-2S] cluster is required as a cofactor. Requires Mg(2+) as cofactor.

The catalysed reaction is (2R)-2,3-dihydroxy-3-methylbutanoate = 3-methyl-2-oxobutanoate + H2O. The enzyme catalyses (2R,3R)-2,3-dihydroxy-3-methylpentanoate = (S)-3-methyl-2-oxopentanoate + H2O. It functions in the pathway amino-acid biosynthesis; L-isoleucine biosynthesis; L-isoleucine from 2-oxobutanoate: step 3/4. Its pathway is amino-acid biosynthesis; L-valine biosynthesis; L-valine from pyruvate: step 3/4. Functions in the biosynthesis of branched-chain amino acids. Catalyzes the dehydration of (2R,3R)-2,3-dihydroxy-3-methylpentanoate (2,3-dihydroxy-3-methylvalerate) into 2-oxo-3-methylpentanoate (2-oxo-3-methylvalerate) and of (2R)-2,3-dihydroxy-3-methylbutanoate (2,3-dihydroxyisovalerate) into 2-oxo-3-methylbutanoate (2-oxoisovalerate), the penultimate precursor to L-isoleucine and L-valine, respectively. The polypeptide is Dihydroxy-acid dehydratase (Chlorobium luteolum (strain DSM 273 / BCRC 81028 / 2530) (Pelodictyon luteolum)).